The chain runs to 452 residues: Dimethyladenosine transferase 2, mitochondrial (452 aa).

Residues I46, E99, and D125 each coordinate S-adenosyl-L-methionine. The disordered stretch occupies residues 408 to 452; sequence ANDEPNLEDGVTLPEEDDAEADEIIEEESPVPATTPVKRRRKASS. Positions 421 to 436 are enriched in acidic residues; sequence PEEDDAEADEIIEEES.

The protein belongs to the class I-like SAM-binding methyltransferase superfamily. rRNA adenine N(6)-methyltransferase family. KsgA subfamily.

It is found in the mitochondrion. Probable S-adenosyl-L-methionine-dependent methyltransferase which specifically dimethylates mitochondrial 12S rRNA at the conserved stem loop. Also required for basal transcription of mitochondrial DNA. Also regulates mitochondrial DNA copy number. Stimulates transcription independently of the methyltransferase activity. In Drosophila melanogaster (Fruit fly), this protein is Dimethyladenosine transferase 2, mitochondrial (mtTFB2).